Consider the following 443-residue polypeptide: ATP-dependent protease ATPase subunit HslU (443 aa).

Residues isoleucine 18, 60–65, aspartate 256, glutamate 321, and arginine 393 contribute to the ATP site; that span reads GVGKTE.

It belongs to the ClpX chaperone family. HslU subfamily. A double ring-shaped homohexamer of HslV is capped on each side by a ring-shaped HslU homohexamer. The assembly of the HslU/HslV complex is dependent on binding of ATP.

It localises to the cytoplasm. Its function is as follows. ATPase subunit of a proteasome-like degradation complex; this subunit has chaperone activity. The binding of ATP and its subsequent hydrolysis by HslU are essential for unfolding of protein substrates subsequently hydrolyzed by HslV. HslU recognizes the N-terminal part of its protein substrates and unfolds these before they are guided to HslV for hydrolysis. The polypeptide is ATP-dependent protease ATPase subunit HslU (Wigglesworthia glossinidia brevipalpis).